The following is a 253-amino-acid chain: Triosephosphate isomerase (253 aa).

9-11 (NWK) serves as a coordination point for substrate. The active-site Electrophile is H94. The Proton acceptor role is filled by E163. Substrate is bound by residues G169, S209, and 230–231 (GG).

It belongs to the triosephosphate isomerase family. In terms of assembly, homodimer.

It is found in the cytoplasm. The enzyme catalyses D-glyceraldehyde 3-phosphate = dihydroxyacetone phosphate. The protein operates within carbohydrate biosynthesis; gluconeogenesis. It participates in carbohydrate degradation; glycolysis; D-glyceraldehyde 3-phosphate from glycerone phosphate: step 1/1. Involved in the gluconeogenesis. Catalyzes stereospecifically the conversion of dihydroxyacetone phosphate (DHAP) to D-glyceraldehyde-3-phosphate (G3P). The chain is Triosephosphate isomerase from Dehalococcoides mccartyi (strain CBDB1).